Consider the following 267-residue polypeptide: MVKTQTYTERASAHPSPVAQRLFKLMDNKKTNLCASVDVKSTEEFLTLIEKLGPYICLVKTHIDIIDDFSYEGTVVPLLALAKKHNFMIFEDRKFADIGNTVKSQYSGGVYKIAQWSDITNAHGITGSGIVKGLKEAAQESSKEPRGLLMLAELSSKGSLAYGEYTEKTIEIAKSDKEFVIGFIAQRDMGGTDEGFDWIVMTPGVGLDDKGDGLGQQYRTVDQVVTTGTDIIIVGRGLFGQGRDPTVEGKRYRDAGWNAYLKKTGSL.

Substrate-binding positions include aspartate 38, 60 to 62, 92 to 101, tyrosine 218, and arginine 236; these read KTH and DRKFADIGNT. Lysine 94 functions as the Proton donor in the catalytic mechanism.

The protein belongs to the OMP decarboxylase family.

The enzyme catalyses orotidine 5'-phosphate + H(+) = UMP + CO2. Its pathway is pyrimidine metabolism; UMP biosynthesis via de novo pathway; UMP from orotate: step 2/2. In Debaryomyces hansenii (strain ATCC 36239 / CBS 767 / BCRC 21394 / JCM 1990 / NBRC 0083 / IGC 2968) (Yeast), this protein is Orotidine 5'-phosphate decarboxylase (URA3).